The chain runs to 400 residues: Cytoplasmic tRNA 2-thiolation protein 2 (400 aa).

This sequence belongs to the CTU2/NCS2 family.

The protein resides in the cytoplasm. The protein operates within tRNA modification; 5-methoxycarbonylmethyl-2-thiouridine-tRNA biosynthesis. Functionally, plays a central role in 2-thiolation of mcm(5)S(2)U at tRNA wobble positions of tRNA(Lys), tRNA(Glu) and tRNA(Gln). May act by forming a heterodimer with NCS6/CTU1 that ligates sulfur from thiocarboxylated URM1 onto the uridine of tRNAs at wobble position. This is Cytoplasmic tRNA 2-thiolation protein 2 from Drosophila virilis (Fruit fly).